Here is a 122-residue protein sequence, read N- to C-terminus: Large ribosomal subunit protein uL14c (122 aa).

Belongs to the universal ribosomal protein uL14 family. As to quaternary structure, part of the 50S ribosomal subunit.

The protein localises to the plastid. It localises to the chloroplast. Its function is as follows. Binds to 23S rRNA. The polypeptide is Large ribosomal subunit protein uL14c (Acorus calamus (Sweet flag)).